A 211-amino-acid polypeptide reads, in one-letter code: MVKYPSGSLAAFRKPVTTQKKMRTGKRSYTHKKGVNFSDRGMTLEQQINESNKYYLTEEIAVVHKKPTPIQIVKVDYPKRSKAVIREAYFRQASTTDYNGVYKGYYLDFEAKETKNKTNFPLKNFHEHQIFHLAECLKQQGICFTIIRFASLERYFVTPASFVINAWRKAEKSSMTLKEIESHSYEIKSGFRPTLPYLKAVDNFIADRKRE.

Residues T95, D97, E110, and Q129 each contribute to the Mg(2+) site.

Belongs to the RecU family. The cofactor is Mg(2+).

The protein resides in the cytoplasm. The catalysed reaction is Endonucleolytic cleavage at a junction such as a reciprocal single-stranded crossover between two homologous DNA duplexes (Holliday junction).. Functionally, endonuclease that resolves Holliday junction intermediates in genetic recombination. Cleaves mobile four-strand junctions by introducing symmetrical nicks in paired strands. Promotes annealing of linear ssDNA with homologous dsDNA. Required for DNA repair, homologous recombination and chromosome segregation. The polypeptide is Holliday junction resolvase RecU (Lactobacillus acidophilus (strain ATCC 700396 / NCK56 / N2 / NCFM)).